Consider the following 852-residue polypeptide: Lon protease homolog 2, peroxisomal (852 aa).

S2 bears the N-acetylserine mark. In terms of domain architecture, Lon N-terminal spans 13 to 222; sequence LPLLLTHESV…MTIPLLVRQI (210 aa). Residue 375–382 participates in ATP binding; sequence GPPGVGKT. The Lon proteolytic domain maps to 651–837; sequence LSQPGVAIGL…DEVLNAAFDG (187 aa). Catalysis depends on residues S743 and K786. A Microbody targeting signal motif is present at residues 850-852; the sequence is SKL.

It belongs to the peptidase S16 family. As to quaternary structure, interacts with PEX5. Interacts with TYSND1. May interact with enzymes involved in beta-oxidation of fatty acids, including ACOX1/AOX.

It localises to the peroxisome matrix. The catalysed reaction is Hydrolysis of proteins in presence of ATP.. Its function is as follows. ATP-dependent serine protease that mediates the selective degradation of misfolded and unassembled polypeptides in the peroxisomal matrix. Necessary for type 2 peroxisome targeting signal (PTS2)-containing protein processing and facilitates peroxisome matrix protein import. May indirectly regulate peroxisomal fatty acid beta-oxidation through degradation of the self-processed forms of TYSND1. This Mus musculus (Mouse) protein is Lon protease homolog 2, peroxisomal (Lonp2).